The chain runs to 216 residues: Large ribosomal subunit protein bL25 (216 aa).

Disordered regions lie at residues 1–21 (MAET…GAVR) and 192–216 (SADN…GKED). The span at 195 to 216 (NEAKTEEAGEDKSEEKSSGKED) shows a compositional bias: basic and acidic residues.

It belongs to the bacterial ribosomal protein bL25 family. CTC subfamily. Part of the 50S ribosomal subunit; part of the 5S rRNA/L5/L18/L25 subcomplex. Contacts the 5S rRNA. Binds to the 5S rRNA independently of L5 and L18.

This is one of the proteins that binds to the 5S RNA in the ribosome where it forms part of the central protuberance. This chain is Large ribosomal subunit protein bL25, found in Parvibaculum lavamentivorans (strain DS-1 / DSM 13023 / NCIMB 13966).